Reading from the N-terminus, the 328-residue chain is GTP 3',8-cyclase (328 aa).

The Radical SAM core domain occupies 1–229 (MNTVDYLRIS…ESFVPGNGPA (229 aa)). Residue Arg8 participates in GTP binding. Positions 15 and 19 each coordinate [4Fe-4S] cluster. Tyr21 is a binding site for S-adenosyl-L-methionine. Cys22 contributes to the [4Fe-4S] cluster binding site. GTP is bound at residue Arg60. Residue Gly64 participates in S-adenosyl-L-methionine binding. Residue Thr91 coordinates GTP. Position 115 (Ser115) interacts with S-adenosyl-L-methionine. Lys155 serves as a coordination point for GTP. Met189 contributes to the S-adenosyl-L-methionine binding site. [4Fe-4S] cluster-binding residues include Cys252 and Cys255. Position 257–259 (257–259 (RMR)) interacts with GTP. Cys269 serves as a coordination point for [4Fe-4S] cluster.

Belongs to the radical SAM superfamily. MoaA family. Monomer and homodimer. The cofactor is [4Fe-4S] cluster.

It carries out the reaction GTP + AH2 + S-adenosyl-L-methionine = (8S)-3',8-cyclo-7,8-dihydroguanosine 5'-triphosphate + 5'-deoxyadenosine + L-methionine + A + H(+). It participates in cofactor biosynthesis; molybdopterin biosynthesis. Functionally, catalyzes the cyclization of GTP to (8S)-3',8-cyclo-7,8-dihydroguanosine 5'-triphosphate. In Trichodesmium erythraeum (strain IMS101), this protein is GTP 3',8-cyclase.